A 556-amino-acid polypeptide reads, in one-letter code: Insulin-like growth factor 2 mRNA-binding protein 2 (556 aa).

2 consecutive RRM domains span residues 3-76 (NKLY…YSVS) and 82-157 (RKIQ…YIPD). Residue Ser-11 is modified to Phosphoserine. Residues 156 to 188 (PDEEVSSPSPPQRAQRGDHSSREQGHAPGGTSQ) are disordered. 2 positions are modified to phosphoserine: Ser-162 and Ser-164. The span at 170–180 (QRGDHSSREQG) shows a compositional bias: basic and acidic residues. 4 consecutive KH domains span residues 193–258 (DFPL…CRMI), 274–341 (EIPL…EIEI), 384–449 (QEIV…QGRI), and 466–532 (KLEA…QRKI). At Thr-507 the chain carries Phosphothreonine.

The protein belongs to the RRM IMP/VICKZ family. In terms of assembly, can form homooligomers and heterooligomers with IGF2BP1 and IGF2BP3 in an RNA-dependent manner. Interacts with HNRPD. Interacts with IGF2BP1. Interacts with ELAVL1, DHX9, HNRNPU, MATR3 and PABPC1.

It localises to the nucleus. The protein resides in the cytoplasm. Its subcellular location is the P-body. It is found in the stress granule. RNA-binding factor that recruits target transcripts to cytoplasmic protein-RNA complexes (mRNPs). This transcript 'caging' into mRNPs allows mRNA transport and transient storage. It also modulates the rate and location at which target transcripts encounter the translational apparatus and shields them from endonuclease attacks or microRNA-mediated degradation. Preferentially binds to N6-methyladenosine (m6A)-containing mRNAs and increases their stability. Binds to the 5'-UTR of the insulin-like growth factor 2 (IGF2) mRNAs. Binding is isoform-specific. Binds to beta-actin/ACTB and MYC transcripts. Increases MYC mRNA stability by binding to the coding region instability determinant (CRD) and binding is enhanced by m6A-modification of the CRD. This chain is Insulin-like growth factor 2 mRNA-binding protein 2 (IGF2BP2), found in Pongo abelii (Sumatran orangutan).